We begin with the raw amino-acid sequence, 369 residues long: Cobalt-precorrin-5B C(1)-methyltransferase (369 aa).

The protein belongs to the CbiD family.

The enzyme catalyses Co-precorrin-5B + S-adenosyl-L-methionine = Co-precorrin-6A + S-adenosyl-L-homocysteine. The protein operates within cofactor biosynthesis; adenosylcobalamin biosynthesis; cob(II)yrinate a,c-diamide from sirohydrochlorin (anaerobic route): step 6/10. Its function is as follows. Catalyzes the methylation of C-1 in cobalt-precorrin-5B to form cobalt-precorrin-6A. In Prosthecochloris aestuarii (strain DSM 271 / SK 413), this protein is Cobalt-precorrin-5B C(1)-methyltransferase.